The primary structure comprises 115 residues: MTSTLDVSKVLGLLDQVLAERKASGDPEASYVAQLHHKGLNKILEKVGEEATETILAAKDAERSGNTDLLVCETADLLFHAMVMLSHLGSNTDAVMAELARRFDLSGLEEKASRK.

This sequence belongs to the PRA-PH family.

The protein resides in the cytoplasm. It carries out the reaction 1-(5-phospho-beta-D-ribosyl)-ATP + H2O = 1-(5-phospho-beta-D-ribosyl)-5'-AMP + diphosphate + H(+). It functions in the pathway amino-acid biosynthesis; L-histidine biosynthesis; L-histidine from 5-phospho-alpha-D-ribose 1-diphosphate: step 2/9. This chain is Phosphoribosyl-ATP pyrophosphatase, found in Saccharophagus degradans (strain 2-40 / ATCC 43961 / DSM 17024).